A 427-amino-acid polypeptide reads, in one-letter code: Enolase (427 aa).

Gln163 lines the (2R)-2-phosphoglycerate pocket. The Proton donor role is filled by Glu205. Positions 242, 288, and 315 each coordinate Mg(2+). Residues Lys340, Arg369, Ser370, and Lys391 each contribute to the (2R)-2-phosphoglycerate site. The active-site Proton acceptor is the Lys340.

The protein belongs to the enolase family. Mg(2+) is required as a cofactor.

It localises to the cytoplasm. Its subcellular location is the secreted. The protein resides in the cell surface. It catalyses the reaction (2R)-2-phosphoglycerate = phosphoenolpyruvate + H2O. The protein operates within carbohydrate degradation; glycolysis; pyruvate from D-glyceraldehyde 3-phosphate: step 4/5. Its function is as follows. Catalyzes the reversible conversion of 2-phosphoglycerate (2-PG) into phosphoenolpyruvate (PEP). It is essential for the degradation of carbohydrates via glycolysis. The chain is Enolase from Cytophaga hutchinsonii (strain ATCC 33406 / DSM 1761 / CIP 103989 / NBRC 15051 / NCIMB 9469 / D465).